Reading from the N-terminus, the 522-residue chain is MAAVAAATRWHLLLVLSAAGLGVTGAPQPPNILLLLMDDMGWGDLGVYGEPSRETPNLDRMAAEGMLFPSFYAANPLCSPSRAALLTGRLPIRTGFYTTNGHARNAYTPQEIVGGIPDPEHLLPELLKGAGYASKIVGKWHLGHRPQFHPLKHGFDEWFGSPNCHFGPYDNRARPNIPVYRDWEMVGRFYEEFPINLKTGESNLTQIYLQEALDFIKRQQATHHPFFLYWAIDATHAPVYASRAFLGTSQRGRYGDAVREIDDSVGRIVGLLRDLKIAGNTFVFFTSDNGAALVSAPKQGGSNGPFLCGKQTTFEGGMREPAIAWWPGHIPAGQVSHQLGSVMDLFTTSLSLAGLEPPSDRAIDGLDLLPAMLQGRLTERPIFYYRGNTLMAATLGQYKAHFWTWTNSWEEFRQGVDFCPGQNVSGVTTHSQEEHTKLPLIFHLGRDPGERFPLSFASTEYLDALRKITLVVQQHQESLVPGQPQLNVCNPAVMNWAPPGCEKLGKCLTPPESVPEKCSWPH.

Positions 1–25 (MAAVAAATRWHLLLVLSAAGLGVTG) are cleaved as a signal peptide. The interval 27 to 379 (PQPPNILLLL…PAMLQGRLTE (353 aa)) is catalytic domain. 3 residues coordinate Ca(2+): aspartate 38, aspartate 39, and cysteine 78. Cysteine 78 acts as the Nucleophile in catalysis. Cysteine 78 carries the 3-oxoalanine (Cys) modification. Histidine 141 is an active-site residue. A glycan (N-linked (GlcNAc...) asparagine) is linked at asparagine 203. Residues aspartate 288 and asparagine 289 each coordinate Ca(2+). A disulfide bond links cysteine 308 and cysteine 419. N-linked (GlcNAc...) asparagine glycosylation is present at asparagine 423. Intrachain disulfides connect cysteine 489–cysteine 518 and cysteine 501–cysteine 507.

This sequence belongs to the sulfatase family. In terms of assembly, homodimer. Ca(2+) is required as a cofactor. In terms of processing, the conversion to 3-oxoalanine (also known as C-formylglycine, FGly), of a serine or cysteine residue in prokaryotes and of a cysteine residue in eukaryotes, is critical for catalytic activity.

The protein resides in the lysosome. The enzyme catalyses Hydrolysis of the 6-sulfate groups of the N-acetyl-D-galactosamine 6-sulfate units of chondroitin sulfate and of the D-galactose 6-sulfate units of keratan sulfate.. The sequence is that of N-acetylgalactosamine-6-sulfatase (GALNS) from Sus scrofa (Pig).